A 374-amino-acid polypeptide reads, in one-letter code: Very late expression factor 1 (374 aa).

The 181-residue stretch at 169–349 (AIDTILNFID…NFDESSSDEE (181 aa)) folds into the Tyr recombinase domain. Active-site residues include Arg-210, Lys-239, Arg-303, and His-326. Residues 328–374 (SPASTKPYLNKYNFDESSSDEESGGNNRDSSTGSSANSSSLYYQTGD) are disordered. The active-site O-(3'-phospho-DNA)-tyrosine intermediate is Tyr-335. Low complexity predominate over residues 357–367 (SSTGSSANSSS).

Belongs to the 'phage' integrase family.

Involved in very late gene activation. This Orgyia pseudotsugata (Douglas-fir tussock moth) protein is Very late expression factor 1 (VLF-1).